We begin with the raw amino-acid sequence, 3423 residues long: Genome polyprotein (3423 aa).

A disordered region spans residues 1 to 25 (MKNPKKKSGGFRIVNMLKRGVARVS). The Cytoplasmic portion of the chain corresponds to 1 to 104 (MKNPKKKSGG…INARKEKKRR (104 aa)). Residues 37–72 (LLLGHGPIRMVLAILAFLRFTAIKPSLGLINRWGSV) form a hydrophobic; homodimerization of capsid protein C region. A propeptide spans 105–122 (GADTSVGIVGLLLTTAMA) (ER anchor for capsid protein C, removed in mature form by serine protease NS3). The helical transmembrane segment at 105-125 (GADTSVGIVGLLLTTAMAAEV) threads the bilayer. Residues 126–249 (TRRGSAYYMY…YTKHLIRVEN (124 aa)) lie on the Extracellular side of the membrane. An N-linked (GlcNAc...) asparagine; by host glycan is attached at N192. A helical transmembrane segment spans residues 250-269 (WIFRNPGFALAAAAIAWLLG). At 270–274 (SSTSQ) the chain is on the cytoplasmic side. A helical transmembrane segment spans residues 275–290 (KVIYLVMILLIAPAYS). Residues 291–745 (IRCIGVSNRD…HQIFGAAFKS (455 aa)) lie on the Extracellular side of the membrane. A Glycyl lysine isopeptide (Lys-Gly) (interchain with G-Cter in ubiquitin) cross-link involves residue K328. Cystine bridges form between C350–C406 and C382–C411. A fusion peptide region spans residues 388 to 401 (DRGWGNGCGLFGKG). An N-linked (GlcNAc...) asparagine; by host glycan is attached at N444. 2 disulfide bridges follow: C480–C581 and C598–C629. Residue K571 forms a Glycyl lysine isopeptide (Lys-Gly) (interchain with G-Cter in ubiquitin) linkage. A helical membrane pass occupies residues 746–767 (LFGGMSWFSQILIGTLLMWLGL). Residues 768–773 (NTKNGS) are Cytoplasmic-facing. Residues 774–794 (ISLMCLALGGVLIFLSTAVSA) traverse the membrane as a helical segment. Residues 795–1177 (DVGCSVDFSK…EGLKKRMTTK (383 aa)) are Lumenal-facing. Intrachain disulfides connect C798/C809, C849/C937, C973/C1017, C1074/C1123, C1085/C1106, and C1107/C1110. 2 N-linked (GlcNAc...) asparagine; by host glycosylation sites follow: N924 and N1001. The helical transmembrane segment at 1178–1198 (IIISTSMAVLVAMILGGFSMS) threads the bilayer. The Cytoplasmic portion of the chain corresponds to 1199 to 1220 (DLAKLAILMGATFAEMNTGGDV). A helical membrane pass occupies residues 1221–1241 (AHLALIAAFKVRPALLVSFIF). Residues 1242–1270 (RANWTPRESMLLALASCLLQTAISALEGD) lie on the Lumenal side of the membrane. The helical transmembrane segment at 1271-1291 (LMVLINGFALAWLAIRAMVVP) threads the bilayer. Topologically, residues 1292–1295 (RTDN) are cytoplasmic. Residues 1296–1316 (ITLAILAALTPLARGTLLVAW) traverse the membrane as a helical segment. Over 1317–1345 (RAGLATCGGFMLLSLKGKGSVKKNLPFVM) the chain is Lumenal. A helical transmembrane segment spans residues 1346–1366 (ALGLTAVRLVDPINVVGLLLL). The Cytoplasmic segment spans residues 1367–1373 (TRSGKRS). Residues 1374–1394 (WPPSEVLTAVGLICALAGGFA) form a helical membrane-spanning segment. The Lumenal portion of the chain corresponds to 1395–1397 (KAD). A helical transmembrane segment spans residues 1398 to 1418 (IEMAGPMAAVGLLIVSYVVSG). Topologically, residues 1419–1472 (KSVDMYIERAGDITWEKDAEVTGNSPRLDVALDESGDFSLVEDDGPPMREIILK) are cytoplasmic. The segment at 1425 to 1464 (IERAGDITWEKDAEVTGNSPRLDVALDESGDFSLVEDDGP) is interacts with and activates NS3 protease. Residues 1429–1451 (GDITWEKDAEVTGNSPRLDVALD) form a disordered region. Residues 1473 to 1493 (VVLMTICGMNPIAIPFAAGAW) constitute an intramembrane region (helical). Topologically, residues 1494–2170 (YVYVKTGKRS…KAAAAQLPET (677 aa)) are lumenal. In terms of domain architecture, Peptidase S7 spans 1503–1680 (SGALWDVPAP…RREEETPVEC (178 aa)). Residues H1553, D1577, and S1637 each act as charge relay system; for serine protease NS3 activity in the active site. The Helicase ATP-binding domain occupies 1683–1839 (PSMLKKKQLT…DSNSPIMDTE (157 aa)). The segment at 1687–1690 (KKKQ) is important for RNA-binding. 1696–1703 (LHPGAGKT) is a binding site for ATP. Residues 1787 to 1790 (DEAH) carry the DEAH box motif. One can recognise a Helicase C-terminal domain in the interval 1834–2013 (PIMDTEVEVP…GLIASLYRPE (180 aa)). K1891 bears the N6-acetyllysine; by host mark. Residues 2171–2191 (LETIMLLGLLGTVSLGIFFVL) form a helical membrane-spanning segment. Topologically, residues 2192-2195 (MRNK) are lumenal. An intramembrane region (helical) is located at residues 2196-2216 (GIGKMGFGMVTLGASAWLMWL). Topologically, residues 2217–2218 (SE) are cytoplasmic. The chain crosses the membrane as a helical span at residues 2219-2239 (IEPARIACVLIVVFLLLVVLI). The Lumenal segment spans residues 2240–2254 (PEPEKQRSPQDNQMA). An intramembrane region (helical) is located at residues 2255 to 2269 (IIIMVAVGLLGLITA). At 2270-2307 (NELGWLERTKSDLSHLMGRREEGATIGFSMDIDLRPAS) the chain is on the lumenal side. The helical intramembrane region spans 2308–2328 (AWAIYAALTTFITPAVQHAVT). Residues 2329–2344 (TSYNNYSLMAMATQAG) lie on the Lumenal side of the membrane. Residues 2345–2365 (VLFGMGKGMPFYAWDFGVPLL) form a helical membrane-spanning segment. Residues 2366–2375 (MIGCYSQLTP) lie on the Cytoplasmic side of the membrane. A helical transmembrane segment spans residues 2376 to 2396 (LTLIVAIILLVAHYMYLIPGL). Topologically, residues 2397-2441 (QAAAARAAQKRTAAGIMKNPVVDGIVVTDIDTMTIDPQVEKKMGQ) are lumenal. A helical membrane pass occupies residues 2442 to 2462 (VLLIAVAVSSAILSRTAWGWG). The Cytoplasmic segment spans residues 2463 to 3423 (EAGALITAAT…GEEGSTPGVL (961 aa)). The mRNA cap 0-1 NS5-type MT domain occupies 2521–2785 (GGGTGETLGE…DVNLGSGTRA (265 aa)). 2533-2539 (KARLNQM) serves as a coordination point for GTP. An S-adenosyl-L-methionine-binding site is contributed by S2576. S2576 is subject to Phosphoserine. The active-site For 2'-O-MTase activity is the K2581. Residues 2597-2600 (VIDL) form an SUMO-interacting motif (SIM) region. Residues G2606, W2607, T2624, K2625, H2630, E2631, D2651, V2652, D2666, and I2667 each coordinate S-adenosyl-L-methionine. Catalysis depends on D2666, which acts as the For 2'-O-MTase activity. Residue 2669-2675 (ESSSSPE) coordinates GTP. K2702 functions as the For 2'-O-MTase activity in the catalytic mechanism. Residue 2733 to 2735 (RNS) participates in GTP binding. The active-site For 2'-O-MTase activity is E2738. Y2740 is a binding site for S-adenosyl-L-methionine. Residues 2908 to 2914 (KHKRPRV) carry the Nuclear localization signal (NLS) motif. Zn(2+) contacts are provided by E2959, H2963, C2968, and C2971. A RdRp catalytic domain is found at 3049–3199 (GRMYADDTAG…KPIDDRFAHA (151 aa)). Zn(2+)-binding residues include H3234, C3250, and C3369.

In the N-terminal section; belongs to the class I-like SAM-binding methyltransferase superfamily. mRNA cap 0-1 NS5-type methyltransferase family. In terms of assembly, homodimer. Interacts with host SERTAD3; this interaction promotes capsid protein C degradation. Interacts with host CAPRIN1; this interaction is probably linked to the inhibition of stress granules formation by the virus. Interacts with host G3BP1; this interaction is probably linked to the inhibition of stress granules formation by the virus. Forms heterodimers with envelope protein E in the endoplasmic reticulum and Golgi. Interacts with non-structural protein 2A. As to quaternary structure, homodimer; in the endoplasmic reticulum and Golgi. Interacts with host TYRO3, AXL and DC-SIGN proteins. Interacts with non-structural protein 2A. Interacts with host HAVCR1; this interaction likely mediates virus attachment to host cell. Interacts with host NCAM1. Interacts with host HSPA5. Interacts with Aedes aegypti SRPN25, APY and venom allergen-1 salivary proteins; the interactions do not affect Zika virus replication in human endothelial cells and keratinocytes. In terms of assembly, homodimer; Homohexamer when secreted. Interacts with host TBK1. Interacts with host USP8. Interacts with envelope protein E. Interacts with the structural protein prM/E complex, and the NS2B/NS3 protease complex. As to quaternary structure, forms a heterodimer with serine protease NS3. May form homooligomers. Interacts with human SPCS1. Interacts with non-structural protein 2A. In terms of assembly, forms a heterodimer with NS2B. Interacts with NS4B. Interacts with unphosphorylated RNA-directed RNA polymerase NS5; this interaction stimulates RNA-directed RNA polymerase NS5 guanylyltransferase activity. Interacts with non-structural protein 2A. Interacts with host SHFL; this interaction promotes NS3 degradation via a lysosome-dependent pathway. Interacts with host CEP63; this interaction disorganizes the centrosome and inhibits host innate immune response. May interact with host ANKLE2; the interaction may cause defects in brain development, such as microcephaly. May interact with host SRPRA and SEC61G. As to quaternary structure, interacts with serine protease NS3. Interacts with NS1. In terms of assembly, homodimer; dimerization may negatively regulate the GTase activity, a crucial step in the capping process. Interacts with host STAT2; this interaction inhibits the phosphorylation of the latter, and, when all viral proteins are present (polyprotein), targets STAT2 for degradation. Interacts with host TBK1 and IKBKE; these interactions lead to the inhibition of the host RIG-I signaling pathway. Interacts with host PAF1 complex; the interaction may prevent the recruitment of the host PAF1 complex to interferon-responsive genes, and thus reduces the immune response. Interacts with serine protease NS3. Interacts with host KPNA2. Interacts with host ZSWIM8; this interaction allows STAT2 binding to ZSWIM8 and subsequent proteasomal degradation leading to inhibition of interferon signaling. Specific enzymatic cleavages in vivo yield mature proteins. Cleavages in the lumen of endoplasmic reticulum are performed by host signal peptidase, whereas cleavages in the cytoplasmic side are performed by serine protease NS3. Signal cleavage at the 2K-4B site requires a prior NS3 protease-mediated cleavage at the 4A-2K site. In terms of processing, cleaved in post-Golgi vesicles by a host furin, releasing the mature small envelope protein M, and peptide pr. This cleavage is incomplete as up to 30% of viral particles still carry uncleaved prM. Post-translationally, N-glycosylation plays a role in virulence in mammalian and mosquito hosts, but may have no effect on neurovirulence. Ubiquitination by host TRIM7 promotes virus attachment and fusion of the virus and the host endosome membrane. In terms of processing, N-glycosylated. The excreted form is glycosylated, which is required for efficient secretion of the protein from infected cells. Post-translationally, ubiquitination by host TRIM22 leads to proteasomal degradation. Acetylated by host KAT5. Acetylation modulates NS3 RNA-binding and unwinding activities and plays an important positive role for viral replication. In terms of processing, phosphorylated on serines residues. This phosphorylation may trigger NS5 nuclear localization. Post-translationally, sumoylated, required for regulating IFN induced interferon stimulated genes/ISGs.

Its subcellular location is the virion. The protein resides in the host nucleus. It is found in the host cytoplasm. It localises to the host perinuclear region. The protein localises to the secreted. Its subcellular location is the virion membrane. The protein resides in the host endoplasmic reticulum membrane. The enzyme catalyses a 5'-end (5'-triphosphoguanosine)-ribonucleoside in mRNA + S-adenosyl-L-methionine = a 5'-end (N(7)-methyl 5'-triphosphoguanosine)-ribonucleoside in mRNA + S-adenosyl-L-homocysteine. The catalysed reaction is a 5'-end (N(7)-methyl 5'-triphosphoguanosine)-ribonucleoside in mRNA + S-adenosyl-L-methionine = a 5'-end (N(7)-methyl 5'-triphosphoguanosine)-(2'-O-methyl-ribonucleoside) in mRNA + S-adenosyl-L-homocysteine + H(+). It carries out the reaction RNA(n) + a ribonucleoside 5'-triphosphate = RNA(n+1) + diphosphate. It catalyses the reaction Selective hydrolysis of -Xaa-Xaa-|-Yaa- bonds in which each of the Xaa can be either Arg or Lys and Yaa can be either Ser or Ala.. The enzyme catalyses a ribonucleoside 5'-triphosphate + H2O = a ribonucleoside 5'-diphosphate + phosphate + H(+). The catalysed reaction is ATP + H2O = ADP + phosphate + H(+). In terms of biological role, plays a role in virus budding by binding to the cell membrane and gathering the viral RNA into a nucleocapsid that forms the core of the mature virus particle. During virus entry, may induce genome penetration into the host cytoplasm after hemifusion induced by the surface proteins. Can migrate to the cell nucleus where it modulates host functions. Inhibits the integrated stress response (ISR) in the infected cell. Inhibits RNA silencing by interfering with host Dicer. Its function is as follows. Prevents premature fusion activity of envelope proteins in trans-Golgi by binding to envelope protein E at pH 6.0. After virion release in extracellular space, gets dissociated from E dimers. Functionally, plays a role in host immune defense modulation and protection of envelope protein E during virion synthesis. PrM-E cleavage is inefficient, many virions are only partially matured and immature prM-E proteins could play a role in immune evasion. Contributes to fetal microcephaly in humans. Acts as a chaperone for envelope protein E during intracellular virion assembly by masking and inactivating envelope protein E fusion peptide. prM is the only viral peptide matured by host furin in the trans-Golgi network probably to avoid catastrophic activation of the viral fusion activity in acidic Golgi compartment prior to virion release. In terms of biological role, may play a role in virus budding. Exerts cytotoxic effects by activating a mitochondrial apoptotic pathway through M ectodomain. May display a viroporin activity. Binds to host cell surface receptors and mediates fusion between viral and cellular membranes. Efficient virus attachment to cell is, at least in part, mediated by host HAVCR1 in a cell-type specific manner. In addition, host NCAM1 can also be used as entry receptor. Interaction with host HSPA5 plays an important role in the early stages of infection as well. Envelope protein is synthesized in the endoplasmic reticulum and forms a heterodimer with protein prM. The heterodimer plays a role in virion budding in the ER, and the newly formed immature particle is covered with 60 spikes composed of heterodimers between precursor prM and envelope protein E. The virion is transported to the Golgi apparatus where the low pH causes the dissociation of PrM-E heterodimers and formation of E homodimers. PrM-E cleavage is inefficient, many virions are only partially matured and immature prM-E proteins could play a role in immune evasion. Its function is as follows. Plays a role in the inhibition of host RLR-induced interferon-beta activation by targeting TANK-binding kinase 1/TBK1. In addition, recruits the host deubiquitinase USP8 to cleave 'Lys-11'-linked polyubiquitin chains from caspase-1/CASP1 thus inhibiting its proteasomal degradation. In turn, stabilized CASP1 promotes cleavage of cGAS, which inhibits its ability to recognize mitochondrial DNA release and initiate type I interferon signaling. Functionally, component of the viral RNA replication complex that recruits genomic RNA, the structural protein prM/E complex, and the NS2B/NS3 protease complex to the virion assembly site and orchestrates virus morphogenesis. Antagonizes also the host MDA5-mediated induction of alpha/beta interferon antiviral response. May disrupt adherens junction formation and thereby impair proliferation of radial cells in the host cortex. In terms of biological role, required cofactor for the serine protease function of NS3. Displays three enzymatic activities: serine protease, NTPase and RNA helicase. NS3 serine protease, in association with NS2B, performs its autocleavage and cleaves the polyprotein at dibasic sites in the cytoplasm: C-prM, NS2A-NS2B, NS2B-NS3, NS3-NS4A, NS4A-2K and NS4B-NS5. NS3 RNA helicase binds RNA and unwinds dsRNA in the 3' to 5' direction. Inhibits the integrated stress response (ISR) in the infected cell by blocking stress granules assembly. Disrupts host centrosome organization in a CEP63-dependent manner to degrade host TBK1 and inhibits innate immune response. Its function is as follows. Regulates the ATPase activity of the NS3 helicase activity. NS4A allows NS3 helicase to conserve energy during unwinding. Cooperatively with NS4B suppresses the Akt-mTOR pathway and leads to cellular dysregulation. By inhibiting host ANKLE2 functions, may cause defects in brain development, such as microcephaly. Also antagonizes the host MDA5-mediated induction of alpha/beta interferon antiviral response. Inhibits the integrated stress response (ISR) in the infected cell by blocking stress granules assembly. Functionally, functions as a signal peptide for NS4B and is required for the interferon antagonism activity of the latter. In terms of biological role, induces the formation of ER-derived membrane vesicles where the viral replication takes place. Also plays a role in the inhibition of host RLR-induced interferon-beta production at TANK-binding kinase 1/TBK1 level. Cooperatively with NS4A suppresses the Akt-mTOR pathway and leads to cellular dysregulation. Replicates the viral (+) and (-) RNA genome, and performs the capping of genomes in the cytoplasm. Methylates viral RNA cap at guanine N-7 and ribose 2'-O positions. Once sufficient NS5 is expressed, binds to the cap-proximal structure and inhibits further translation of the viral genome. Besides its role in RNA genome replication, also prevents the establishment of a cellular antiviral state by blocking the interferon-alpha/beta (IFN-alpha/beta) signaling pathway. Mechanistically, interferes with host kinases TBK1 and IKKE upstream of interferon regulatory factor 3/IRF3 to inhibit the RIG-I pathway. Also antagonizes type I interferon signaling by targeting STAT2 for degradation by the proteasome thereby preventing activation of JAK-STAT signaling pathway. Mechanistically, acts as a scaffold protein to connect host ZSWIM8/CUL3 ligase complex and STAT2, leading to STAT2 degradation. Within the host nucleus, disrupts host SUMO1 and STAT2 co-localization with PML, resulting in PML degradation. May also reduce immune responses by preventing the recruitment of the host PAF1 complex to interferon-responsive genes. This Zika virus (isolate ZIKV/Human/French Polynesia/10087PF/2013) (ZIKV) protein is Genome polyprotein.